The primary structure comprises 373 residues: tRNA-specific 2-thiouridylase MnmA (373 aa).

Residues 12-19 and Met-38 each bind ATP; that span reads GMSGGVDS. Positions 98-100 are interaction with target base in tRNA; that stretch reads NPD. Cys-103 acts as the Nucleophile in catalysis. Residues Cys-103 and Cys-200 are joined by a disulfide bond. Gly-127 serves as a coordination point for ATP. Residues 150-152 form an interaction with tRNA region; sequence KDQ. The active-site Cysteine persulfide intermediate is Cys-200. Positions 312–313 are interaction with tRNA; it reads RY.

This sequence belongs to the MnmA/TRMU family.

It is found in the cytoplasm. The enzyme catalyses S-sulfanyl-L-cysteinyl-[protein] + uridine(34) in tRNA + AH2 + ATP = 2-thiouridine(34) in tRNA + L-cysteinyl-[protein] + A + AMP + diphosphate + H(+). Catalyzes the 2-thiolation of uridine at the wobble position (U34) of tRNA, leading to the formation of s(2)U34. The sequence is that of tRNA-specific 2-thiouridylase MnmA from Streptococcus thermophilus (strain CNRZ 1066).